A 224-amino-acid polypeptide reads, in one-letter code: Cytidylate kinase (224 aa).

9-17 serves as a coordination point for ATP; that stretch reads GPSGVGKGT.

Belongs to the cytidylate kinase family. Type 1 subfamily.

It localises to the cytoplasm. It catalyses the reaction CMP + ATP = CDP + ADP. It carries out the reaction dCMP + ATP = dCDP + ADP. This is Cytidylate kinase from Dichelobacter nodosus (strain VCS1703A).